The sequence spans 156 residues: Ribonuclease pancreatic (156 aa).

The N-terminal stretch at 1–28 (MALEKSLVLLPLLVLILLVLGWVQPSLG) is a signal peptide. The segment covering 33-43 (AKKFQRQHMDS) has biased composition (basic and acidic residues). The disordered stretch occupies residues 33 to 52 (AKKFQRQHMDSDSSPSSNST). 2 residues coordinate substrate: Lys-35 and Arg-38. His-40 serves as the catalytic Proton acceptor. N-linked (GlcNAc...) asparagine glycosylation is found at Asn-50 and Asn-62. Cystine bridges form between Cys-54-Cys-112, Cys-68-Cys-123, Cys-86-Cys-138, and Cys-93-Cys-100. Residues 69-73 (KPVNT) and Lys-94 contribute to the substrate site. The N-linked (GlcNAc...) asparagine glycan is linked to Asn-104. A substrate-binding site is contributed by Arg-113. Asn-116 carries an N-linked (GlcNAc...) asparagine glycan. His-147 serves as the catalytic Proton donor.

This sequence belongs to the pancreatic ribonuclease family. As to quaternary structure, monomer. Interacts with and forms tight 1:1 complexes with RNH1. Dimerization of two such complexes may occur. Interaction with RNH1 inhibits this protein.

It localises to the secreted. The enzyme catalyses an [RNA] containing cytidine + H2O = an [RNA]-3'-cytidine-3'-phosphate + a 5'-hydroxy-ribonucleotide-3'-[RNA].. The catalysed reaction is an [RNA] containing uridine + H2O = an [RNA]-3'-uridine-3'-phosphate + a 5'-hydroxy-ribonucleotide-3'-[RNA].. Functionally, endonuclease that catalyzes the cleavage of RNA on the 3' side of pyrimidine nucleotides. Acts on single-stranded and double-stranded RNA. In Gorilla gorilla gorilla (Western lowland gorilla), this protein is Ribonuclease pancreatic (RNASE1).